A 441-amino-acid polypeptide reads, in one-letter code: Proline--tRNA ligase (441 aa).

The protein belongs to the class-II aminoacyl-tRNA synthetase family. ProS type 2 subfamily. As to quaternary structure, homodimer.

The protein resides in the cytoplasm. The enzyme catalyses tRNA(Pro) + L-proline + ATP = L-prolyl-tRNA(Pro) + AMP + diphosphate. Its function is as follows. Catalyzes the attachment of proline to tRNA(Pro) in a two-step reaction: proline is first activated by ATP to form Pro-AMP and then transferred to the acceptor end of tRNA(Pro). The polypeptide is Proline--tRNA ligase (Methylobacterium radiotolerans (strain ATCC 27329 / DSM 1819 / JCM 2831 / NBRC 15690 / NCIMB 10815 / 0-1)).